The chain runs to 85 residues: Phycobilisome 9.7 kDa linker polypeptide, phycocyanin-associated, rod (85 aa).

Positions 16–74 (NRVFVYEVEGLRQNEQTDNNRYQIRNSSTIEIQVPYSRMNEEDRRITRLGGRIVNIRPA) constitute a CpcD-like domain.

This sequence belongs to the phycobilisome linker protein family.

Its subcellular location is the cellular thylakoid membrane. Functionally, rod linker protein, associated with phycocyanin. Linker polypeptides determine the state of aggregation and the location of the disk-shaped phycobiliprotein units within the phycobilisome and modulate their spectroscopic properties in order to mediate a directed and optimal energy transfer. This is Phycobilisome 9.7 kDa linker polypeptide, phycocyanin-associated, rod (cpcD2) from Microchaete diplosiphon (Fremyella diplosiphon).